The primary structure comprises 2267 residues: Acetyl-CoA carboxylase 1 (2267 aa).

The 507-residue stretch at 38 to 544 folds into the Biotin carboxylation domain; the sequence is PIHSVLVANN…HTGWLDSRIA (507 aa). The ATP-grasp domain maps to 190 to 384; sequence PESCNSIPEE…AAQVVVGMGV (195 aa). Residue 216–273 coordinates ATP; that stretch reads CQVVGYPAMIKASWGGGGKGIRKVHNDDEVRALFKQVQGEVPGSPIFIMKVASQSRHL. The Mg(2+) site is built by glutamate 339, glutamate 353, and asparagine 355. Residues glutamate 339, glutamate 353, and asparagine 355 each contribute to the Mn(2+) site. Arginine 357 is an active-site residue. A Biotinyl-binding domain is found at 671–745; sequence LQKEHDPSKL…QAADLIARLD (75 aa). N6-biotinyllysine is present on lysine 712. The region spanning 1502–1843 is the CoA carboxyltransferase N-terminal domain; sequence PYKPLDAIDL…YVGGPLPIMK (342 aa). Residues 1502 to 2163 form a carboxyltransferase region; the sequence is PYKPLDAIDL…EDALAKEIRE (662 aa). Positions 1752, 2053, and 2055 each coordinate CoA. The CoA carboxyltransferase C-terminal domain maps to 1847-2163; the sequence is PPDRPVTYFP…EDALAKEIRE (317 aa).

As to quaternary structure, homodimer. Mg(2+) is required as a cofactor. It depends on Mn(2+) as a cofactor. Requires biotin as cofactor.

Its subcellular location is the cytoplasm. It localises to the cytosol. The catalysed reaction is hydrogencarbonate + acetyl-CoA + ATP = malonyl-CoA + ADP + phosphate + H(+). It catalyses the reaction N(6)-biotinyl-L-lysyl-[protein] + hydrogencarbonate + ATP = N(6)-carboxybiotinyl-L-lysyl-[protein] + ADP + phosphate + H(+). It participates in lipid metabolism; malonyl-CoA biosynthesis; malonyl-CoA from acetyl-CoA: step 1/1. Its function is as follows. Multifunctional enzyme that catalyzes the carboxylation of acetyl-CoA, forming malonyl-CoA, which is used in the plastid for fatty acid synthesis and in the cytosol in various biosynthetic pathways including fatty acid elongation. The protein is Acetyl-CoA carboxylase 1 (ACC1) of Oryza sativa subsp. japonica (Rice).